The chain runs to 158 residues: MTKVTELVADVVTPLAEARGDELVDVEYVKEKKQYYLRIYVDRRPGGIDIEEIANLSELVSEKLDELDPDPFPEPYILELSSPGLERPIKNEKDWERAKGSYIHVSLYQKIDGEKTYEGTLKDLNQNQIVLEVKIKTRRKEITIPRKVIASSRFAVEF.

Belongs to the RimP family.

The protein resides in the cytoplasm. Required for maturation of 30S ribosomal subunits. This Lactobacillus gasseri (strain ATCC 33323 / DSM 20243 / BCRC 14619 / CIP 102991 / JCM 1131 / KCTC 3163 / NCIMB 11718 / NCTC 13722 / AM63) protein is Ribosome maturation factor RimP.